The primary structure comprises 172 residues: Protein-export protein SecB (172 aa).

Belongs to the SecB family. As to quaternary structure, homotetramer, a dimer of dimers. One homotetramer interacts with 1 SecA dimer.

Its subcellular location is the cytoplasm. In terms of biological role, one of the proteins required for the normal export of preproteins out of the cell cytoplasm. It is a molecular chaperone that binds to a subset of precursor proteins, maintaining them in a translocation-competent state. It also specifically binds to its receptor SecA. This Stenotrophomonas maltophilia (strain K279a) protein is Protein-export protein SecB.